A 316-amino-acid polypeptide reads, in one-letter code: Glutathione synthetase (316 aa).

The ATP-grasp domain maps to 125–310 (KLFTAWFSDL…ITGMLMDAIE (186 aa)). 151–207 (WEKHSDIILKPLDGMGGASIFRVKEGDPNLGVIAETLTEHGTRYCMAQNYLPAIKDG) is an ATP binding site. Mg(2+) is bound by residues glutamate 281 and asparagine 283.

It belongs to the prokaryotic GSH synthase family. As to quaternary structure, homotetramer. The cofactor is Mg(2+). It depends on Mn(2+) as a cofactor.

The catalysed reaction is gamma-L-glutamyl-L-cysteine + glycine + ATP = glutathione + ADP + phosphate + H(+). Its pathway is sulfur metabolism; glutathione biosynthesis; glutathione from L-cysteine and L-glutamate: step 2/2. With respect to regulation, inhibited by 7,8-dihydrofolate, methotrexate and trimethoprim. This Escherichia coli (strain K12) protein is Glutathione synthetase (gshB).